The following is an 88-amino-acid chain: Small ribosomal subunit protein bS20 (88 aa).

This sequence belongs to the bacterial ribosomal protein bS20 family.

In terms of biological role, binds directly to 16S ribosomal RNA. This is Small ribosomal subunit protein bS20 from Maricaulis maris (strain MCS10) (Caulobacter maris).